The following is a 908-amino-acid chain: MSKTRVYELAQQMGIDNKELMAKLAAVGVEVKNHMAAIDDADIKKLSAPATVKEVSQEEVRVKPTLIRRRAKVVEAVAEEPPVEPKAEPAPAEVTTEKVAEKARVEEAPAPEAPVQAAEPVKIATEEAVPERATANKAKILGRVEIPGLTQRAKPPVQREAQPTARVVERPEARPSAERPAPGQRPEGQRPGQRPEGGYRPAGPRPAGQRPEGPRPGYTERPVTRGPERPGQARGPERPAPVVPLEMPPAGEDRRKGRKGKEVAGAGKKGPAGAAVPKRKEEFKKTELFEKHERVFEPGPRGKGKKRQAEKIQIGKKTEITVPKAIKRIIKISETITVGELAKRMGIKANDLIRALMKMGVMATINHALDFDTATILATDFGYEIENVALDIDEILESTPDTPESLVKRPPVVTIMGHVDHGKTSLLDAIRQTNVIAGEAGGITQHIGAYDVTLNGRKITFLDTPGHEAFTAMRARGAKVTDIVILVVAADDGVMPQTREAVNHSKAAGVPIIVAVNKIDKPEAKPERVKQELMELGLVSEEWGGETIFVDVSAKKRVNLPTLLEMVLLQADVLELKANEDKAARGTIVEAKLDKGRGPVATVLVQEGTLKVGDYFVAGIHFGRVRAMQNDRAEKVLSAGPSMPVEVIGFTGVPDAGDVFVALADEKQAKEIASLRQQKVRETELAKHSKLSLEQLYEKIQMGEVKDLNTIVKGDVQGSVEAVSESLRKLSTDAIRLNVIHASVGAITETDVNLATASNAIILGFNVRPEVKAQALAEKEGVDIRLYNIIYDAVDDIKKAMEGLLEPTLREKFLGRAEVRETFSVPKHGTVAGSYVLDGKMIRNSQVRLLRDNVVVFEGKMGSLRRFKDDVKEVASGYECGISIENYNDIKVGDIIESFEMEKVATKL.

The segment at 145 to 312 (EIPGLTQRAK…KGKKRQAEKI (168 aa)) is disordered. Basic and acidic residues predominate over residues 167 to 177 (VVERPEARPSA). Low complexity-rich tracts occupy residues 194–217 (RPEG…PRPG) and 263–276 (VAGA…GAAV). The segment covering 278-296 (KRKEEFKKTELFEKHERVF) has biased composition (basic and acidic residues). The region spanning 408–577 (KRPPVVTIMG…LLQADVLELK (170 aa)) is the tr-type G domain. The tract at residues 417 to 424 (GHVDHGKT) is G1. 417-424 (GHVDHGKT) provides a ligand contact to GTP. Positions 442–446 (GITQH) are G2. Residues 463-466 (DTPG) form a G3 region. GTP-binding positions include 463–467 (DTPGH) and 517–520 (NKID). The segment at 517-520 (NKID) is G4. The interval 553–555 (SAK) is G5.

Belongs to the TRAFAC class translation factor GTPase superfamily. Classic translation factor GTPase family. IF-2 subfamily.

The protein localises to the cytoplasm. Its function is as follows. One of the essential components for the initiation of protein synthesis. Protects formylmethionyl-tRNA from spontaneous hydrolysis and promotes its binding to the 30S ribosomal subunits. Also involved in the hydrolysis of GTP during the formation of the 70S ribosomal complex. The chain is Translation initiation factor IF-2 from Geotalea daltonii (strain DSM 22248 / JCM 15807 / FRC-32) (Geobacter daltonii).